A 665-amino-acid polypeptide reads, in one-letter code: F-box/LRR-repeat protein 3 (665 aa).

The F-box domain occupies 11–60 (KPFDLLSEELVFIILDLISPNPSDLKSFSLTCKSFYQLESKHRGSLKPLR). 21 LRR repeats span residues 61–81 (SDYLPRILTRYRNTTDLDLTF), 82–108 (CPRVTDYALSVVGCLSGPTLRSLDLSR), 109–134 (SGSFSAAGLLRLALKCVNLVEIDLSN), 135–159 (ATEMRDADAAVVAEARSLERLKLGR), 160–185 (CKMLTDMGIGCIAVGCKKLNTVSLKW), 186–211 (CVGVGDLGVGLLAVKCKDIRTLDLSY), 214–235 (ITGKCLHDILKLQHLEELLLEG), 236–261 (CFGVDDDSLKSLRHDCKSLKKLDASS), 262–287 (CQNLTHRGLTSLLSGAGYLQRLDLSH), 288–312 (CSSVISLDFASSLKKVSALQSIRLD), 313–338 (GCSVTPDGLKAIGTLCNSLKEVSLSK), 339–364 (CVSVTDEGLSSLVMKLKDLRKLDITC), 365–390 (CRKLSRVSITQIANSCPLLVSLKMES), 391–416 (CSLVSREAFWLIGQKCRLLEELDLTD), 419–440 (IDDEGLKSISSCLSLSSLKLGI), 441–466 (CLNITDKGLSYIGMGCSNLRELDLYR), 467–492 (SVGITDVGISTIAQGCIHLETINISY), 493–517 (CQDITDKSLVSLSKCSLLQTFESRG), 518–543 (CPNITSQGLAAIAVRCKRLAKVDLKK), 544–569 (CPSINDAGLLALAHFSQNLKQINVSD), and 594–619 (SSGLRPSGVAAALLGCGGLRKAKLHA).

The protein is F-box/LRR-repeat protein 3 (FBL3) of Arabidopsis thaliana (Mouse-ear cress).